Here is a 308-residue protein sequence, read N- to C-terminus: Glutaminase (308 aa).

Substrate is bound by residues Ser66, Asn117, Glu161, Asn168, Tyr192, Tyr244, and Val262.

The protein belongs to the glutaminase family. In terms of assembly, homotetramer.

It carries out the reaction L-glutamine + H2O = L-glutamate + NH4(+). The sequence is that of Glutaminase from Yersinia pestis bv. Antiqua (strain Nepal516).